A 472-amino-acid polypeptide reads, in one-letter code: Methanethiol oxidase (472 aa).

Ala2 bears the N-acetylalanine mark. Residues Ser111 and Ser467 each carry the phosphoserine modification.

It belongs to the selenium-binding protein family. In terms of assembly, interacts with USP33. The N-terminus is blocked. As to expression, highly expressed in liver, kidney and, to a lesser extent, lung.

Its subcellular location is the nucleus. It is found in the cytoplasm. The protein resides in the cytosol. It localises to the membrane. The catalysed reaction is methanethiol + O2 + H2O = hydrogen sulfide + formaldehyde + H2O2 + H(+). Its pathway is organosulfur degradation. Functionally, catalyzes the oxidation of methanethiol, an organosulfur compound known to be produced in substantial amounts by gut bacteria. Selenium-binding protein which may be involved in the sensing of reactive xenobiotics in the cytoplasm. May be involved in intra-Golgi protein transport. This chain is Methanethiol oxidase (Selenbp1), found in Mus musculus (Mouse).